A 313-amino-acid polypeptide reads, in one-letter code: 3'-5' exoribonuclease YhaM (313 aa).

The HD domain maps to 163–279 (HVVSMLRLAK…LHQIDLMDAS (117 aa)).

This sequence belongs to the YhaM family.

Its function is as follows. Shows a 3'-5' exoribonuclease activity. The chain is 3'-5' exoribonuclease YhaM from Listeria monocytogenes serotype 4b (strain CLIP80459).